A 291-amino-acid polypeptide reads, in one-letter code: Elongation factor Ts (291 aa).

Positions threonine 80–valine 83 are involved in Mg(2+) ion dislocation from EF-Tu.

This sequence belongs to the EF-Ts family.

It localises to the cytoplasm. In terms of biological role, associates with the EF-Tu.GDP complex and induces the exchange of GDP to GTP. It remains bound to the aminoacyl-tRNA.EF-Tu.GTP complex up to the GTP hydrolysis stage on the ribosome. This chain is Elongation factor Ts, found in Limosilactobacillus reuteri (strain DSM 20016) (Lactobacillus reuteri).